The sequence spans 142 residues: Large ribosomal subunit protein uL16 (142 aa).

This sequence belongs to the universal ribosomal protein uL16 family. As to quaternary structure, part of the 50S ribosomal subunit.

Functionally, binds 23S rRNA and is also seen to make contacts with the A and possibly P site tRNAs. The sequence is that of Large ribosomal subunit protein uL16 from Thermosipho melanesiensis (strain DSM 12029 / CIP 104789 / BI429).